The primary structure comprises 2039 residues: PHD finger protein 3 (2039 aa).

Phosphoserine occurs at positions 97 and 125. The span at 144-168 (STIAKRSNAAPLSNTKKASGKTVST) shows a compositional bias: polar residues. Residues 144–178 (STIAKRSNAAPLSNTKKASGKTVSTAKAGVKQPER) form a disordered region. Phosphoserine occurs at positions 283 and 299. Residues 460 to 472 (ESHETANLQDDRN) are compositionally biased toward basic and acidic residues. Disordered regions lie at residues 460 to 492 (ESHE…KHTK), 528 to 555 (VKRN…IDKE), and 596 to 685 (LSDK…SLDE). The segment covering 473–483 (SQSSSVSYLES) has biased composition (low complexity). A compositionally biased stretch (basic and acidic residues) spans 596–612 (LSDKSHAHPGCLKEPHH). Polar residues predominate over residues 617-640 (GHVSHSSQKQCHKPQQQAPAMKTN). Over residues 642 to 670 (HVKEELEHPGVEHFKEEDKLKLKKPEKNL) the composition is skewed to basic and acidic residues. A Glycyl lysine isopeptide (Lys-Gly) (interchain with G-Cter in SUMO2) cross-link involves residue K644. Phosphoserine is present on S680. The PHD-type zinc-finger motif lies at 717 to 772 (SKQCGFCKKPHGNRFMVGCGRCDDWFHGDCVGLSLSQAQQMGEEDKEYVCVKCCAE). The tract at residues 860-904 (GQPVLPRRSSEEKSEKIPKESTTVTCTGEKASKPGTHEKQEMKKK) is disordered. Composition is skewed to basic and acidic residues over residues 867–878 (RSSEEKSEKIPK) and 889–900 (KASKPGTHEKQE). The TFIIS central domain occupies 927 to 1046 (IRQSVRHSLK…MIEKEQREVE (120 aa)). Residue K964 forms a Glycyl lysine isopeptide (Lys-Gly) (interchain with G-Cter in SUMO2) linkage. A Phosphoserine modification is found at S1014. The tract at residues 1078–1109 (EPAANKSLEKPEGSEKQKEEVDSMSKDTTSQH) is disordered. A compositionally biased stretch (basic and acidic residues) spans 1084–1102 (SLEKPEGSEKQKEEVDSMS). 3 positions are modified to phosphoserine: S1133, S1148, and S1178. 3 disordered regions span residues 1171–1191 (FEEE…RPEM), 1360–1380 (STSH…PPDK), and 1581–1623 (KQEE…VGKG). Basic and acidic residues predominate over residues 1581–1598 (KQEETVESKEKTLKRQLQ). Phosphoserine is present on residues S1614 and S1642. 2 disordered regions span residues 1643-1684 (PQFI…LPGL) and 1776-1800 (PSKS…PMRP). Basic and acidic residues predominate over residues 1666–1684 (ESKDGDSCRNGEKHMLPGL). A compositionally biased stretch (low complexity) spans 1781-1797 (TFTSRSTSPRTSTNFSP). R1867 and R1877 each carry asymmetric dimethylarginine. Positions 1884–2039 (FYQVKDIRRP…DHTDRTKSKR (156 aa)) are disordered. Composition is skewed to basic and acidic residues over residues 1888–1902 (KDIR…DPWG) and 1912–2039 (PFNR…KSKR). Phosphoserine occurs at positions 1898 and 1925. K1931 participates in a covalent cross-link: Glycyl lysine isopeptide (Lys-Gly) (interchain with G-Cter in SUMO2).

Ubiquitous. Expression is significantly reduced or lost in glioblastomas, glioblastoma cell lines, anaplastic astrocytomas, and astrocytomas.

The protein is PHD finger protein 3 (PHF3) of Homo sapiens (Human).